A 510-amino-acid chain; its full sequence is Lysine--tRNA ligase (510 aa).

Mg(2+) is bound by residues glutamate 420 and glutamate 427.

This sequence belongs to the class-II aminoacyl-tRNA synthetase family. Homodimer. Mg(2+) serves as cofactor.

The protein resides in the cytoplasm. It catalyses the reaction tRNA(Lys) + L-lysine + ATP = L-lysyl-tRNA(Lys) + AMP + diphosphate. The protein is Lysine--tRNA ligase of Vibrio campbellii (strain ATCC BAA-1116).